A 170-amino-acid polypeptide reads, in one-letter code: Ribosome maturation factor RimM (170 aa).

A PRC barrel domain is found at 97-170 (HPDEYYWVDL…RIVVDWDPEF (74 aa)).

Belongs to the RimM family. In terms of assembly, binds ribosomal protein uS19.

The protein localises to the cytoplasm. In terms of biological role, an accessory protein needed during the final step in the assembly of 30S ribosomal subunit, possibly for assembly of the head region. Essential for efficient processing of 16S rRNA. May be needed both before and after RbfA during the maturation of 16S rRNA. It has affinity for free ribosomal 30S subunits but not for 70S ribosomes. The chain is Ribosome maturation factor RimM from Xylella fastidiosa (strain M23).